Here is a 147-residue protein sequence, read N- to C-terminus: DNA-directed RNA polymerase RPB6 homolog (147 aa).

It belongs to the archaeal RpoK/eukaryotic RPB6 RNA polymerase subunit family. In terms of assembly, part of the viral DNA-directed RNA polymerase that consists of 8 polII-like subunits (RPB1, RPB2, RPB3, RPB5, RPB6, RPB7, RPB9, RPB10), a capping enzyme and a termination factor.

Its subcellular location is the host cytoplasm. It localises to the virion. Component of the DNA-directed RNA polymerase (RNAP) that catalyzes the transcription in the cytoplasm of viral DNA into RNA using the four ribonucleoside triphosphates as substrates. The sequence is that of DNA-directed RNA polymerase RPB6 homolog from Ornithodoros (relapsing fever ticks).